Consider the following 322-residue polypeptide: MEATAKFDFMASGEDELSFRTGDILKILSNQEEWLKAELGSQEGYVPKNFIDIEFPEWFHEGLSRHQAENLLMGKDIGFFIIRASQSSPGDFSISVRHEDDVQHFKVMRDTKGNYFLWTEKFPSLNKLVDYYRTTSISKQKQVFLRDGTQDQGHRGNSLDRRSQGGPHPSGTVGEEIRPSVNRKLSDHLPLGPQQFHPHQQPSPQFTPGPQPPQQQRYLQHFHQDRRGGSLDINDGHCGLGSEVNATLMHRRHTDPVQLQAAGRVRWARALYDFEALEEDELGFRSGEVVEVLDSSNPSWWTGRLHNKLGLFPANYVAPMMR.

In terms of domain architecture, SH3 1 spans 1 to 56 (MEATAKFDFMASGEDELSFRTGDILKILSNQEEWLKAELGSQEGYVPKNFIDIEFP). Tyr-45 carries the phosphotyrosine modification. In terms of domain architecture, SH2 spans 58–149 (WFHEGLSRHQ…QKQVFLRDGT (92 aa)). Position 106 is an N6-acetyllysine (Lys-106). Residues 143 to 216 (VFLRDGTQDQ…TPGPQPPQQQ (74 aa)) form a disordered region. A compositionally biased stretch (basic and acidic residues) spans 148 to 163 (GTQDQGHRGNSLDRRS). The residue at position 186 (Ser-186) is a Phosphoserine. Over residues 193 to 204 (PQQFHPHQQPSP) the composition is skewed to low complexity. Residue Ser-230 is modified to Phosphoserine. A Phosphothreonine modification is found at Thr-254. The 60-residue stretch at 263–322 (GRVRWARALYDFEALEEDELGFRSGEVVEVLDSSNPSWWTGRLHNKLGLFPANYVAPMMR) folds into the SH3 2 domain.

It belongs to the GRB2/sem-5/DRK family. In terms of assembly, interacts with phosphorylated LAT and LAX1 upon TCR activation. Interacts with SHB. Interacts with PTPN23. Interacts with phosphorylated LIME1 upon TCR activation.

Its subcellular location is the nucleus. The protein resides in the cytoplasm. It is found in the endosome. Interacts with SLP-76 to regulate NF-AT activation. Binds to tyrosine-phosphorylated shc. In Mus musculus (Mouse), this protein is GRB2-related adaptor protein 2 (Grap2).